The sequence spans 483 residues: Membrane-bound lytic murein transglycosylase F (483 aa).

Positions 1–18 (MKGLIARFIAGFALLLWA) are cleaved as a signal peptide. The interval 19–267 (WDMVFPWQQL…RIEEKYFNHL (249 aa)) is non-LT domain. Positions 269–483 (HFDYVDIQSY…SKESDSTLKE (215 aa)) are LT domain. Glutamate 312 is an active-site residue. Positions 458–483 (QQIQNNEEQPSVPQEISKESDSTLKE) are disordered. Basic and acidic residues predominate over residues 473 to 483 (ISKESDSTLKE).

It in the N-terminal section; belongs to the bacterial solute-binding protein 3 family. This sequence in the C-terminal section; belongs to the transglycosylase Slt family.

Its subcellular location is the cell outer membrane. The catalysed reaction is Exolytic cleavage of the (1-&gt;4)-beta-glycosidic linkage between N-acetylmuramic acid (MurNAc) and N-acetylglucosamine (GlcNAc) residues in peptidoglycan, from either the reducing or the non-reducing ends of the peptidoglycan chains, with concomitant formation of a 1,6-anhydrobond in the MurNAc residue.. Functionally, murein-degrading enzyme that degrades murein glycan strands and insoluble, high-molecular weight murein sacculi, with the concomitant formation of a 1,6-anhydromuramoyl product. Lytic transglycosylases (LTs) play an integral role in the metabolism of the peptidoglycan (PG) sacculus. Their lytic action creates space within the PG sacculus to allow for its expansion as well as for the insertion of various structures such as secretion systems and flagella. The polypeptide is Membrane-bound lytic murein transglycosylase F (Actinobacillus pleuropneumoniae serotype 5b (strain L20)).